We begin with the raw amino-acid sequence, 92 residues long: uncharacterized protein (92 aa).

This is an uncharacterized protein from Pasteurella multocida (strain Pm70).